Consider the following 388-residue polypeptide: Methylthioribose-1-phosphate isomerase (388 aa).

Asp-258 serves as the catalytic Proton donor.

Belongs to the eIF-2B alpha/beta/delta subunits family. MtnA subfamily.

It is found in the cytoplasm. It localises to the nucleus. It catalyses the reaction 5-(methylsulfanyl)-alpha-D-ribose 1-phosphate = 5-(methylsulfanyl)-D-ribulose 1-phosphate. It participates in amino-acid biosynthesis; L-methionine biosynthesis via salvage pathway; L-methionine from S-methyl-5-thio-alpha-D-ribose 1-phosphate: step 1/6. In terms of biological role, catalyzes the interconversion of methylthioribose-1-phosphate (MTR-1-P) into methylthioribulose-1-phosphate (MTRu-1-P). The chain is Methylthioribose-1-phosphate isomerase from Sordaria macrospora (strain ATCC MYA-333 / DSM 997 / K(L3346) / K-hell).